The following is a 468-amino-acid chain: Citrate synthase, mitochondrial (468 aa).

A mitochondrion-targeting transit peptide spans 1-30 (MSLITAGRLCARILGAKNSPCALIAARQAS). Catalysis depends on residues H303 and H349. An oxaloacetate-binding site is contributed by R358. The active site involves D404. Oxaloacetate-binding residues include R430 and R450.

It belongs to the citrate synthase family. In terms of assembly, homodimer.

The protein localises to the mitochondrion matrix. It catalyses the reaction oxaloacetate + acetyl-CoA + H2O = citrate + CoA + H(+). The protein operates within carbohydrate metabolism; tricarboxylic acid cycle; isocitrate from oxaloacetate: step 1/2. In terms of biological role, key enzyme of the Krebs tricarboxylic acid cycle which catalyzes the synthesis of citrate from acetyl coenzyme A and oxaloacetate. This Xenopus tropicalis (Western clawed frog) protein is Citrate synthase, mitochondrial (cs).